A 641-amino-acid chain; its full sequence is UvrABC system protein C (641 aa).

In terms of domain architecture, GIY-YIG spans Glu16 to Ile95. Positions Thr208 to Ala243 constitute a UVR domain.

It belongs to the UvrC family. In terms of assembly, interacts with UvrB in an incision complex.

It localises to the cytoplasm. In terms of biological role, the UvrABC repair system catalyzes the recognition and processing of DNA lesions. UvrC both incises the 5' and 3' sides of the lesion. The N-terminal half is responsible for the 3' incision and the C-terminal half is responsible for the 5' incision. In Acidothermus cellulolyticus (strain ATCC 43068 / DSM 8971 / 11B), this protein is UvrABC system protein C.